We begin with the raw amino-acid sequence, 1449 residues long: uncharacterized protein (1449 aa).

Residues 1–13 (MELRSDASHKENV) are compositionally biased toward basic and acidic residues. Disordered regions lie at residues 1–32 (MELRSDASHKENVSPKPAALPKPEQRRFRRSL), 123–201 (SNLS…LRSW), 258–298 (APQE…RRRR), 315–437 (LSDS…NKAQ), 523–551 (KQVQPHMQAGPGSPPSRRAQGKGLSLGRS), 1257–1278 (DQGPRAHSSPEPRACKAQSKAH), and 1399–1449 (RLAA…QLQL). Over residues 123–133 (SNLSINETSSP) the composition is skewed to polar residues. 2 stretches are compositionally biased toward polar residues: residues 315–333 (LSDSWAQSKLMSPETTLGT) and 384–394 (PCSSAFSNTAW). Positions 400–419 (QKGEEGAPRERVHREEERTA) are enriched in basic and acidic residues. The span at 426–437 (VPASSASKNKAQ) shows a compositional bias: polar residues. The segment covering 1258 to 1270 (QGPRAHSSPEPRA) has biased composition (basic and acidic residues).

This is an uncharacterized protein from Homo sapiens (Human).